Reading from the N-terminus, the 2179-residue chain is Axotactin (2179 aa).

A signal peptide spans 1-18; that stretch reads MAFPYIWALLPLICSASG. At 19-1816 the chain is on the extracellular side; it reads LSLPNMTSTD…DENKQEDSTQ (1798 aa). Asparagine 23 and asparagine 52 each carry an N-linked (GlcNAc...) asparagine glycan. Positions 59–107 are disordered; that stretch reads GGLAGSSTGGQSLPDTGGGNSAGGSPAGGSSGTGGGGSNSGISGNNSAM. Positions 74-97 are enriched in gly residues; sequence TGGGNSAGGSPAGGSSGTGGGGSN. Asparagine 103 carries N-linked (GlcNAc...) asparagine glycosylation. One can recognise a BPTI/Kunitz inhibitor domain in the interval 119 to 170; the sequence is CAGPGDPGPCKQYIYKWRYEPTTNECTNFIWGGCEGNPQNRFGTEAECLFHC. Intrachain disulfides connect cysteine 119-cysteine 170, cysteine 128-cysteine 152, and cysteine 144-cysteine 166. The disordered stretch occupies residues 201 to 220; that stretch reads YTQSPAQSPDGMGGAEGGDG. The span at 211–220 shows a compositional bias: gly residues; sequence GMGGAEGGDG. The Laminin G-like 1 domain maps to 242–438; that stretch reads KTFIFAKNNT…TKHENVNEGC (197 aa). N-linked (GlcNAc...) asparagine glycosylation is present at asparagine 249. 4 disulfides stabilise this stretch: cysteine 405/cysteine 438, cysteine 442/cysteine 455, cysteine 449/cysteine 464, and cysteine 466/cysteine 476. The EGF-like 1 domain maps to 439-477; sequence SDMCESRHNLCFVGSRCINHYGGISCDCFGTHYEGEHCD. 2 Laminin G-like domains span residues 481–664 and 660–839; these read ATII…AEFV and EAEF…LDNC. 3 N-linked (GlcNAc...) asparagine glycosylation sites follow: asparagine 542, asparagine 571, and asparagine 741. 4 cysteine pairs are disulfide-bonded: cysteine 808-cysteine 839, cysteine 845-cysteine 857, cysteine 851-cysteine 866, and cysteine 868-cysteine 878. The EGF-like 2 domain maps to 841–879; the sequence is YIDPCKRPNTCEHGGKCFVKDDRVTCDCKHTGYIGKNCH. N-linked (GlcNAc...) asparagine glycosylation is found at asparagine 925, asparagine 1000, asparagine 1019, and asparagine 1026. Positions 1087–1259 constitute a Laminin G-like 4 domain; it reads YVVTFTTSQS…VHLSEIIKDC (173 aa). Disulfide bonds link cysteine 1231-cysteine 1259, cysteine 1263-cysteine 1274, cysteine 1268-cysteine 1283, and cysteine 1285-cysteine 1296. The EGF-like 3 domain occupies 1260 to 1297; the sequence is KPSCVPSPCRNGAQCKELWSSFKCVCNNPWAHIGEFCE. Positions 1316 to 1526 constitute a Laminin G-like 5 domain; that stretch reads RNYLSVGATP…PTQEGVLPNC (211 aa). Asparagine 1393 carries an N-linked (GlcNAc...) asparagine glycan. Disulfide bonds link cysteine 1494–cysteine 1526, cysteine 1530–cysteine 1541, cysteine 1535–cysteine 1552, and cysteine 1554–cysteine 1564. The EGF-like 4 domain maps to 1527-1565; sequence QIKCDAEPCKNGGTCQEHFAEQLSTCDCEHTSFLGEFCS. One can recognise a Laminin G-like 6 domain in the interval 1569–1765; it reads GADFSGESTL…NPQGVRSAQC (197 aa). N-linked (GlcNAc...) asparagine glycans are attached at residues asparagine 1667, asparagine 1707, asparagine 1751, and asparagine 1782. A disulfide bond links cysteine 1722 and cysteine 1765. A helical transmembrane segment spans residues 1817-1837; the sequence is VVFLTLTSVFVIIVICCLLEV. Residues 1838–2179 are Cytoplasmic-facing; sequence YRSHLAYKKR…TSIDSILSLD (342 aa). 2 disordered regions span residues 1891-2141 and 2156-2179; these read YTYK…PTLF and SYLG…LSLD. The span at 1916–1930 shows a compositional bias: polar residues; sequence GSATPSQPGTPTALS. Residues 1940–1949 show a composition bias toward acidic residues; the sequence is EEEEEEEDEA. A compositionally biased stretch (basic and acidic residues) spans 1954-1966; sequence AAEKSGENEEPPA. 2 stretches are compositionally biased toward polar residues: residues 1969-1981 and 2010-2025; these read TTAS…QAQP and EPSS…QLAQ. Residues 2064–2079 show a composition bias toward basic and acidic residues; the sequence is PQEHKSRHKATDDTEA. The segment covering 2082-2091 has biased composition (low complexity); sequence QQQQQQQQQQ. 2 stretches are compositionally biased toward polar residues: residues 2092-2105 and 2165-2179; these read SFDV…SSLP and PRSN…LSLD.

The protein resides in the cell projection. It localises to the axon. It is found in the membrane. In terms of biological role, may have serine protease inhibitor activity. Might play a role in the glial-neuronal signaling pathway that is important in establishing the electrical properties of axonal membranes. This Drosophila melanogaster (Fruit fly) protein is Axotactin.